Reading from the N-terminus, the 56-residue chain is MLRAAIAFFIIAIVAYIFGASGVAGMSVEIGRILLFVFLALAIISFVINLVSGRKP.

2 consecutive transmembrane segments (helical) span residues Ala-4 to Ala-24 and Ile-33 to Gly-53.

It belongs to the UPF0391 family.

It is found in the cell membrane. In Bdellovibrio bacteriovorus (strain ATCC 15356 / DSM 50701 / NCIMB 9529 / HD100), this protein is UPF0391 membrane protein Bd1438.